The following is a 71-amino-acid chain: Alpha-cobratoxin (71 aa).

Cystine bridges form between Cys-3–Cys-20, Cys-14–Cys-41, Cys-26–Cys-30, Cys-45–Cys-56, and Cys-57–Cys-62.

It belongs to the three-finger toxin family. Long-chain subfamily. Type II alpha-neurotoxin sub-subfamily. In terms of assembly, monomer, homo- or heterodimer with cytotoxins 1 (P60305), 2 (AC P01445), and 3 (AC P01446); disulfide-linked. In terms of processing, in homodimer alpha-cobratoxin, selective reduction of Cys(26)-Cys(30) in one subunit does not affect the activity against the alpha-7/CHRNA7 nAChR, whereas its reduction in both subunits almost prevents alpha-7/CHRNA7 nAChR recognition. On the contrary, reduction of one or both Cys(26)-Cys(30) disulfide bonds in the homodimer considerably potentiates inhibition of the alpha-3-beta-2/CHRNA3-CHRNB2 nAChR by the toxin. As to expression, expressed by the venom gland.

It localises to the secreted. Its function is as follows. Monomer: binds with high affinity to muscular (alpha-1-beta-1-gamma-delta/CHRNA1-CHRNB1-CHRNG-CHRND) nAChR (tested on Torpedo californica, Kd=0.2-4.5 nM) and neuronal alpha-7/CHRNA7 nicotinic acetylcholine receptors (Kd=13-105 nM). Also inhibits GABA(A) channels. Heteropentamer targets studied are composed of alpha-1-beta-3-gamma-2 (GABRA1-GABRB3-GABRG2) subunits (IC(50)=236 nM), alpha-1-beta-2-gamma-2 (GABRA1-GABRB2-GABRG2) subunits (IC(50)=469 nM), alpha-2-beta-2-gamma-2 (GABRA2-GABRB2-GABRG2) subunits (IC(50)=485 nM), alpha-5-beta-3-gamma-2 (GABRA5-GABRB3-GABRG2) subunits (IC(50)=635 nM), and alpha-2-beta-3-gamma-2 (GABRA2-GABRB3-GABRG2) subunits (IC(50)=1099 nM) (activated by 10 uM GABA). In terms of biological role, homodimer: binds with high affinity (but lower than the monomeric form) to muscular (IC(50)=9.7 nM) and with low affinity to neuronal alpha-7/CHRNA7 nAChRs (IC(50)=1370 nM). However, it acquires (compared to the monomeric form) the capacity to block alpha-3/beta-2 (CHRNA3/CHRNB2) nAChRs. Heterodimer with cytotoxin 3 (AC P01446): is slightly more active than the homodimer in inhibiting alpha-7/CHRNA7 nAChR and is considerably more active in blocking the alpha-3-beta-2/CHRNA3-CHRNB2 nAChR. The sequence is that of Alpha-cobratoxin from Naja kaouthia (Monocled cobra).